We begin with the raw amino-acid sequence, 88 residues long: Putative regulatory protein AM1_5498 (88 aa).

It belongs to the RemA family.

The chain is Putative regulatory protein AM1_5498 from Acaryochloris marina (strain MBIC 11017).